Consider the following 250-residue polypeptide: Probable transcriptional regulatory protein Nther_1800 (250 aa).

The protein belongs to the TACO1 family.

Its subcellular location is the cytoplasm. The polypeptide is Probable transcriptional regulatory protein Nther_1800 (Natranaerobius thermophilus (strain ATCC BAA-1301 / DSM 18059 / JW/NM-WN-LF)).